Here is a 659-residue protein sequence, read N- to C-terminus: Heparin-sulfate lyase (659 aa).

Residues 1–24 (MTTKIFKRIIVFAVIALSSGNILA) form the signal peptide. Catalysis depends on Tyr-294, which acts as the Proton acceptor.

It belongs to the polysaccharide lyase 12 family.

Its subcellular location is the periplasm. The enzyme catalyses Elimination of sulfate, appears to act on linkages between N-acetyl-D-glucosamine and uronate. Product is an unsaturated sugar.. Its function is as follows. Specifically cleaves heparan sulfate-rich regions of acidic polysaccharides. Does not act on N,O-desulfated glucosamine or N-acetyl-O-sulfated glucosamine linkages. Functions in cleaving metazoan heparan sulfate and providing carbon, nitrogen and sulfate sources for microorganisms. The protein is Heparin-sulfate lyase (hepC) of Pedobacter heparinus (strain ATCC 13125 / DSM 2366 / CIP 104194 / JCM 7457 / NBRC 12017 / NCIMB 9290 / NRRL B-14731 / HIM 762-3).